Here is a 293-residue protein sequence, read N- to C-terminus: Ethanolamine ammonia-lyase small subunit (293 aa).

2 residues coordinate adenosylcob(III)alamin: valine 207 and glutamate 228.

It belongs to the EutC family. In terms of assembly, the basic unit is a heterodimer which dimerizes to form tetramers. The heterotetramers trimerize; 6 large subunits form a core ring with 6 small subunits projecting outwards. It depends on adenosylcob(III)alamin as a cofactor.

It localises to the bacterial microcompartment. The catalysed reaction is ethanolamine = acetaldehyde + NH4(+). It functions in the pathway amine and polyamine degradation; ethanolamine degradation. In terms of biological role, catalyzes the deamination of various vicinal amino-alcohols to oxo compounds. Allows this organism to utilize ethanolamine as the sole source of nitrogen and carbon in the presence of external vitamin B12. The chain is Ethanolamine ammonia-lyase small subunit from Listeria monocytogenes serotype 4b (strain CLIP80459).